A 179-amino-acid polypeptide reads, in one-letter code: Ribosome-recycling factor (179 aa).

The protein belongs to the RRF family.

The protein localises to the cytoplasm. In terms of biological role, responsible for the release of ribosomes from messenger RNA at the termination of protein biosynthesis. May increase the efficiency of translation by recycling ribosomes from one round of translation to another. The chain is Ribosome-recycling factor from Chlamydia muridarum (strain MoPn / Nigg).